The sequence spans 171 residues: MSKANSFNKKDLIACGHGQLFGKNSPRLPIDNMLMMDRITKINADGGEFGKGEIVAELDINPDLWFFGCHFSGDPVMPGCLGLDALWQLVGFFLGWEGAEGKGRALGVGEVKFTGQVLPDAKKVTYKLTIKRKVYRKLVMGIADATMEVDGREIYSAKDLKVGIFTDTSSF.

His70 is an active-site residue.

This sequence belongs to the thioester dehydratase family. FabA subfamily. In terms of assembly, homodimer.

It is found in the cytoplasm. The enzyme catalyses a (3R)-hydroxyacyl-[ACP] = a (2E)-enoyl-[ACP] + H2O. It carries out the reaction (3R)-hydroxydecanoyl-[ACP] = (2E)-decenoyl-[ACP] + H2O. It catalyses the reaction (2E)-decenoyl-[ACP] = (3Z)-decenoyl-[ACP]. It participates in lipid metabolism; fatty acid biosynthesis. In terms of biological role, necessary for the introduction of cis unsaturation into fatty acids. Catalyzes the dehydration of (3R)-3-hydroxydecanoyl-ACP to E-(2)-decenoyl-ACP and then its isomerization to Z-(3)-decenoyl-ACP. Can catalyze the dehydratase reaction for beta-hydroxyacyl-ACPs with saturated chain lengths up to 16:0, being most active on intermediate chain length. In Shewanella sediminis (strain HAW-EB3), this protein is 3-hydroxydecanoyl-[acyl-carrier-protein] dehydratase.